The primary structure comprises 94 residues: Putative defensin-like protein 88 (94 aa).

The signal sequence occupies residues Met-1–Ser-26. Disulfide bonds link Cys-32–Cys-72, Cys-38–Cys-59, and Cys-48–Cys-71.

It belongs to the DEFL family.

Its subcellular location is the secreted. This chain is Putative defensin-like protein 88, found in Arabidopsis thaliana (Mouse-ear cress).